A 150-amino-acid chain; its full sequence is UPF0178 protein PC1_0756 (150 aa).

Belongs to the UPF0178 family.

The sequence is that of UPF0178 protein PC1_0756 from Pectobacterium carotovorum subsp. carotovorum (strain PC1).